The chain runs to 589 residues: Ufm1-specific protease (589 aa).

A disordered region spans residues 1–22; sequence MTNSQTVSLIGPTQMAPQSTPP. Active-site residues include cysteine 421, aspartate 545, and histidine 547.

This sequence belongs to the peptidase C78 family. In terms of assembly, interacts with odr-4. As to expression, expressed in head and tail neurons. Expressed in the amphid head neurons ADL, ASI, ASH, ASJ, ASG, ADF, ASK, AWA, AWB, AWC, and in two tail neurons, the phasmid tail neurons PHA and PHB.

The protein localises to the endoplasmic reticulum membrane. The protein resides in the cytoplasm. It localises to the perinuclear region. Its function is as follows. Thiol protease which recognizes and hydrolyzes the peptide bond at the C-terminal Gly of ufm-1, a ubiquitin-like modifier protein bound to a number of target proteins. Required, with oct-4, for the localization of a subset of 7 transmembrane domain odorant receptors, including odr-10, to the cilia of olfactory neurons AWA and AWC. Operates in aggregation behavior, and responses to oxygen levels. This Caenorhabditis elegans protein is Ufm1-specific protease.